The sequence spans 375 residues: Superinfection exclusion protein (375 aa).

The signal sequence occupies residues 1-15; the sequence is MIALLILSLACSVSA.

This sequence belongs to the serpin family. Orthopoxvirus OPG040 subfamily. Interacts with OPG185/A56 protein.

Its subcellular location is the virion membrane. The protein localises to the host cell membrane. In terms of biological role, negatively regulates superinfection and syncytium formation in infected host cells. Acts in concert with OPG185/A56 protein at the host cell membrane by interacting with and inhibiting the mature virion entry/fusion complex (EFC). This mechanism ensures that new virions released from the cell cannot enter already infected cells. This Cynomys gunnisoni (Gunnison's prairie dog) protein is Superinfection exclusion protein (OPG040).